The chain runs to 105 residues: MVKQIESKYAFQEALNSAGEKLVVVDFSATWCGPCKMIKPFFHSLSEKYSNVVFLEVDVDDCQDVASECEVKCMPTFQFFKKGQKVGEFSGANKEKLEATINELI.

In terms of domain architecture, Thioredoxin spans 2–105 (VKQIESKYAF…KLEATINELI (104 aa)). At Lys-3 the chain carries N6-acetyllysine. Lys-8 bears the N6-succinyllysine mark. Catalysis depends on nucleophile residues Cys-32 and Cys-35. A disulfide bond links Cys-32 and Cys-35. Lys-39 is modified (N6-acetyllysine). Cys-62 and Cys-69 each carry S-nitrosocysteine. At Cys-73 the chain carries S-nitrosocysteine; alternate. Lys-94 carries the post-translational modification N6-acetyllysine; alternate. Lys-94 carries the post-translational modification N6-succinyllysine; alternate.

It belongs to the thioredoxin family. As to quaternary structure, homodimer; disulfide-linked. Interacts with TXNIP through the redox-active site. Interacts with MAP3K5 and CASP3. Interacts with APEX1; the interaction stimulates the FOS/JUN AP-1 DNA-binding activity in a redox-dependent manner. Post-translationally, in the fully reduced protein, both Cys-69 and Cys-73 are nitrosylated in response to nitric oxide (NO). When two disulfide bonds are present in the protein, only Cys-73 is nitrosylated. Cys-73 can serve as donor for nitrosylation of target proteins. Erythrocytes.

Its subcellular location is the nucleus. The protein localises to the cytoplasm. The protein resides in the secreted. Participates in various redox reactions through the reversible oxidation of its active center dithiol to a disulfide and catalyzes dithiol-disulfide exchange reactions. Plays a role in the reversible S-nitrosylation of cysteine residues in target proteins, and thereby contributes to the response to intracellular nitric oxide. Nitrosylates the active site Cys of CASP3 in response to nitric oxide (NO), and thereby inhibits caspase-3 activity. Induces the FOS/JUN AP-1 DNA binding activity in ionizing radiation (IR) cells through its oxidation/reduction status and stimulates AP-1 transcriptional activity. This Sus scrofa (Pig) protein is Thioredoxin (TXN).